The following is a 136-amino-acid chain: Large ribosomal subunit protein bL20c (136 aa).

The protein belongs to the bacterial ribosomal protein bL20 family.

The protein resides in the plastid. Its subcellular location is the chloroplast. In terms of biological role, binds directly to 23S ribosomal RNA and is necessary for the in vitro assembly process of the 50S ribosomal subunit. It is not involved in the protein synthesizing functions of that subunit. The protein is Large ribosomal subunit protein bL20c of Huperzia lucidula (Shining clubmoss).